The following is a 529-amino-acid chain: Putative E3 ubiquitin-protein ligase ARI4 (529 aa).

The segment covering 1 to 22 has biased composition (acidic residues); the sequence is MDDEYMSLEEEEDNCYPSEFDD. The tract at residues 1 to 23 is disordered; it reads MDDEYMSLEEEEDNCYPSEFDDH. The TRIAD supradomain stretch occupies residues 115-327; that stretch reads KTMKCDICME…IAGHSCGRYK (213 aa). Zn(2+)-binding residues include Cys119, Cys122, Cys137, His139, Cys142, Cys145, Cys164, Cys169, Cys206, Cys212, Cys230, Cys232, Cys237, Cys240, His245, Cys250, Cys277, and Cys280. An RING-type 1 zinc finger spans residues 119–169; it reads CDICMEEDLSKYAMTRMECGHRFCNDCWKEHFTVRINEGEGKRIRCMAYKC. An IBR-type zinc finger spans residues 186–250; sequence EKFDRFLIES…LSESHSPCSC (65 aa). The RING-type 2; atypical zinc-finger motif lies at 277–305; that stretch reads CPKCSKPIQKRDGCNHMTCKCGQHFCWLC. Cys290 is an active-site residue. The Zn(2+) site is built by Cys295, Cys297, Cys302, Cys305, His313, and Cys323.

The protein belongs to the RBR family. Ariadne subfamily. The cofactor is Zn(2+).

The catalysed reaction is [E2 ubiquitin-conjugating enzyme]-S-ubiquitinyl-L-cysteine + [acceptor protein]-L-lysine = [E2 ubiquitin-conjugating enzyme]-L-cysteine + [acceptor protein]-N(6)-ubiquitinyl-L-lysine.. It functions in the pathway protein modification; protein ubiquitination. Functionally, might act as an E3 ubiquitin-protein ligase, or as part of E3 complex, which accepts ubiquitin from specific E2 ubiquitin-conjugating enzymes and then transfers it to substrates. The chain is Putative E3 ubiquitin-protein ligase ARI4 (ARI4) from Arabidopsis thaliana (Mouse-ear cress).